The primary structure comprises 614 residues: DNA repair protein rad26 (614 aa).

Residues 29–43 are compositionally biased toward low complexity; it reads QAQTQVQAQSSQVVV. Disordered regions lie at residues 29–76 and 157–214; these read QAQT…QASL and KKMK…TAED. Composition is skewed to polar residues over residues 50–76 and 181–190; these read QNLNLPNSYTNSSQKVRESTVNSQASL and LLSSSDQLAK. The segment covering 191–207 has biased composition (basic residues); that stretch reads STKHAAKNSPSKKKRKT.

As to quaternary structure, interacts with cds1.

The protein localises to the nucleus. Its function is as follows. Involved in cell cycle arrest when DNA synthesis is inhibited by hydroxyurea, and in mitosis arrest after treatment with DNA-damaging agents. This protein is S phase-specific. This chain is DNA repair protein rad26 (rad26), found in Schizosaccharomyces pombe (strain 972 / ATCC 24843) (Fission yeast).